Reading from the N-terminus, the 199-residue chain is Charged multivesicular body protein 1b (199 aa).

Coiled-coil stretches lie at residues asparagine 10 to lysine 30 and threonine 178 to valine 199. The segment at glutamate 167–valine 199 is disordered. The segment covering glutamine 170–serine 182 has biased composition (polar residues). The MIT-interacting motif motif lies at aspartate 186–arginine 196.

It belongs to the SNF7 family. As to quaternary structure, probable peripherally associated component of the endosomal sorting required for transport complex III (ESCRT-III).

It is found in the cytoplasm. The protein localises to the cytosol. The protein resides in the endosome. It localises to the late endosome membrane. In terms of biological role, probable peripherally associated component of the endosomal sorting required for transport complex III (ESCRT-III) which is involved in multivesicular bodies (MVBs) formation and sorting of endosomal cargo proteins into MVBs. MVBs contain intraluminal vesicles (ILVs) that are generated by invagination and scission from the limiting membrane of the endosome and mostly are delivered to lysosomes enabling degradation of membrane proteins, such as stimulated growth factor receptors, lysosomal enzymes and lipids. The protein is Charged multivesicular body protein 1b (chmp1b) of Danio rerio (Zebrafish).